The following is a 171-amino-acid chain: 6,7-dimethyl-8-ribityllumazine synthase (171 aa).

Residues phenylalanine 24, 58 to 60, and 82 to 84 each bind 5-amino-6-(D-ribitylamino)uracil; these read ALE and AVI. 87-88 is a binding site for (2S)-2-hydroxy-3-oxobutyl phosphate; the sequence is ET. Histidine 90 serves as the catalytic Proton donor. Residue asparagine 115 coordinates 5-amino-6-(D-ribitylamino)uracil. Arginine 129 serves as a coordination point for (2S)-2-hydroxy-3-oxobutyl phosphate. The tract at residues 150–171 is disordered; it reads ALDQLGDDEDEEEDEDDEEERA. A compositionally biased stretch (acidic residues) spans 154–171; it reads LGDDEDEEEDEDDEEERA.

The protein belongs to the DMRL synthase family.

It carries out the reaction (2S)-2-hydroxy-3-oxobutyl phosphate + 5-amino-6-(D-ribitylamino)uracil = 6,7-dimethyl-8-(1-D-ribityl)lumazine + phosphate + 2 H2O + H(+). Its pathway is cofactor biosynthesis; riboflavin biosynthesis; riboflavin from 2-hydroxy-3-oxobutyl phosphate and 5-amino-6-(D-ribitylamino)uracil: step 1/2. Catalyzes the formation of 6,7-dimethyl-8-ribityllumazine by condensation of 5-amino-6-(D-ribitylamino)uracil with 3,4-dihydroxy-2-butanone 4-phosphate. This is the penultimate step in the biosynthesis of riboflavin. The protein is 6,7-dimethyl-8-ribityllumazine synthase of Burkholderia cenocepacia (strain HI2424).